A 75-amino-acid chain; its full sequence is Small ribosomal subunit protein bS21 (75 aa).

The disordered stretch occupies residues 52–75; it reads RRARKLARKRAQREGLIGGRPGAR. Residues 53 to 62 show a composition bias toward basic residues; it reads RARKLARKRA.

It belongs to the bacterial ribosomal protein bS21 family.

This chain is Small ribosomal subunit protein bS21, found in Brucella anthropi (strain ATCC 49188 / DSM 6882 / CCUG 24695 / JCM 21032 / LMG 3331 / NBRC 15819 / NCTC 12168 / Alc 37) (Ochrobactrum anthropi).